Reading from the N-terminus, the 84-residue chain is Beta-mammal Tt1g (84 aa).

A signal peptide spans 1–20 (MKGMILFISCILLIGIVVEC). The LCN-type CS-alpha/beta domain maps to 21-82 (KEGYLMDHEG…VWERATNRCG (62 aa)). Disulfide bonds link Cys31/Cys81, Cys35/Cys57, Cys43/Cys62, and Cys47/Cys64. Cysteine amide is present on Cys81.

Belongs to the long (4 C-C) scorpion toxin superfamily. Sodium channel inhibitor family. Beta subfamily. Expressed by the venom gland.

The protein localises to the secreted. Its function is as follows. Beta toxins modify sodium channel function in two ways: an excitatory effect (shifting the activation process to more negative potential) and/or a depressant effect (reducing the peak current). At concentration of 500 nM this toxin produces channel opening at more negative potentials in hNav1.2/SCN2A and hNav1.3/SCN3A, which shows the biggest effect. On the other hand the peak current is decreased in hNav1.4/SCN4A and hNav1.5/SCN5A channels, without apparent modification of the activation gate. This toxin is active against mammals. The protein is Beta-mammal Tt1g of Tityus trivittatus (Argentinean scorpion).